The primary structure comprises 463 residues: FAD-dependent monooxygenase str9 (463 aa).

Residues Glu37, Gly50, and Arg114 each coordinate FAD. Residue Arg200 is part of the active site. Asp334 serves as a coordination point for FAD.

Belongs to the paxM FAD-dependent monooxygenase family.

The protein operates within mycotoxin biosynthesis. Its function is as follows. FAD-dependent monooxygenase; part of the gene cluster that mediates the biosynthesis of strobilurin A, an antifungal polyketide that contains a key beta-methoxyacrylate toxophore that targets the complex III of the mitochondrial electron transport chain. Strobilurin biosynthesis begins with construction of benzoyl CoA by step-wise elimination of ammonia from phenylalanine by the phenylalanine ammonia-lyase str11, oxygenation by str8 and retro-Claisen reaction to form benzoic acid, which is activated to its CoA thiolester benzoyl CoA by the dedicated CoA ligase str10. Benzoyl CoA forms the starter unit for the highly reducing polyketide synthase stpks1 that produces the polyketide prestrobilutin A. The FAD-dependent oxygenase str9 then catalyzes the key oxidative rearrangement responsible for the creation of the beta-methoxyacrylate toxophore. Str9 performs epoxidation of the 2,3 olefin of prestrobilutin A, followed by Meinwald rearrangement to furnish the aldehyde intermediate. Rapid enolization of the aldehyde intermediate would give the beta-methoxyacrylate skeleton and methylations catalyzed by str2 and str3 complete the synthesis and lead to the production of strobilurin A. The short-chain dehydrogenase stl2 and the dehydrogenase str4 play a role in the shunt pathway leading to the production of bolineol. The cluster encodes no obvious halogenase gene that could be involved in production of strobilurin B, nor any obvious dimethylallyl-transferase that could be involved in the production of strobilurin G. It is possible that unknown proteins encoded in, or near, the cluster (such as str1 or stl1) may form new classes of halogenases or dimethylally-transferases, or that the responsible genes are located elsewhere on the genome. Similarly, proteins encoded by str5/str6 hydrolases appear to have no chemical role in the biosynthesis of strobilurin A. Finally, no obvious self-resistance gene is found within the cluster. This chain is FAD-dependent monooxygenase str9, found in Strobilurus tenacellus.